The following is a 321-amino-acid chain: tRNA(Ile)-lysidine synthase (321 aa).

21-26 (SYGSDS) contacts ATP.

Belongs to the tRNA(Ile)-lysidine synthase family.

It localises to the cytoplasm. The enzyme catalyses cytidine(34) in tRNA(Ile2) + L-lysine + ATP = lysidine(34) in tRNA(Ile2) + AMP + diphosphate + H(+). Functionally, ligates lysine onto the cytidine present at position 34 of the AUA codon-specific tRNA(Ile) that contains the anticodon CAU, in an ATP-dependent manner. Cytidine is converted to lysidine, thus changing the amino acid specificity of the tRNA from methionine to isoleucine. The protein is tRNA(Ile)-lysidine synthase of Campylobacter jejuni subsp. jejuni serotype O:2 (strain ATCC 700819 / NCTC 11168).